Here is a 347-residue protein sequence, read N- to C-terminus: RNA 3'-terminal phosphate cyclase (347 aa).

ATP is bound by residues Q109 and 290 to 294 (YLADQ). The Tele-AMP-histidine intermediate role is filled by H315.

This sequence belongs to the RNA 3'-terminal cyclase family. Type 1 subfamily.

Its subcellular location is the cytoplasm. It carries out the reaction a 3'-end 3'-phospho-ribonucleotide-RNA + ATP = a 3'-end 2',3'-cyclophospho-ribonucleotide-RNA + AMP + diphosphate. Catalyzes the conversion of 3'-phosphate to a 2',3'-cyclic phosphodiester at the end of RNA. The mechanism of action of the enzyme occurs in 3 steps: (A) adenylation of the enzyme by ATP; (B) transfer of adenylate to an RNA-N3'P to produce RNA-N3'PP5'A; (C) and attack of the adjacent 2'-hydroxyl on the 3'-phosphorus in the diester linkage to produce the cyclic end product. The biological role of this enzyme is unknown but it is likely to function in some aspects of cellular RNA processing. This chain is RNA 3'-terminal phosphate cyclase, found in Ralstonia nicotianae (strain ATCC BAA-1114 / GMI1000) (Ralstonia solanacearum).